The following is a 1993-amino-acid chain: [F-actin]-monooxygenase MICAL3 (1993 aa).

The tract at residues 2-494 (EERKQETTNQ…RHLYDSGETK (493 aa)) is monooxygenase domain. FAD is bound by residues Cys-97, 116-118 (EKR), 123-125 (RNN), Phe-183, Tyr-298, and Asp-398. The Calponin-homology (CH) domain occupies 518 to 624 (VARSSKLLGW…YLTQFYEMFK (107 aa)). At Ser-649 the chain carries Phosphoserine. The interval 658–704 (GQTISRKRSPKDKKEKDSDGAGKRRKTSQSEEEEPPRSYKGERPTLV) is disordered. Positions 669 to 679 (DKKEKDSDGAG) are enriched in basic and acidic residues. A phosphoserine mark is found at Ser-685 and Ser-687. The LIM zinc-binding domain maps to 762–824 (DTCYFCQKRV…KPHYCYRLSG (63 aa)). Residues Cys-764, Cys-767, His-785, Cys-788, Cys-791, Cys-794, Cys-814, and His-817 each coordinate Zn(2+). The segment at 854 to 886 (NGLASVAASSAERSPGTSMNGLEEPSIAKRLRG) is disordered. Positions 860-873 (AASSAERSPGTSMN) are enriched in polar residues. The residue at position 887 (Thr-887) is a Phosphothreonine. Disordered regions lie at residues 905-1023 (ELEE…RLQQ), 1039-1309 (WTHI…LSGP), 1332-1546 (IRRS…FFTP), and 1559-1837 (KENG…EELK). Acidic residues predominate over residues 938–951 (SEMEEEEEEDDEDD). Basic and acidic residues predominate over residues 975–988 (GRSEEELEASKNFE). Ser-977 carries the post-translational modification Phosphoserine. Residues 989-1014 (PEEEEEEEEYEEEDEEYEEEEEEESS) are compositionally biased toward acidic residues. The segment covering 1039-1051 (WTHIREREAEERM) has biased composition (basic and acidic residues). The segment covering 1065–1090 (DEDDLEEDADSEPAETEGEAAEDGDP) has biased composition (acidic residues). Residues 1111–1148 (EAEHRLQSQAKVKAELELRVSENEEEKPSDAPKQEERG) show a composition bias toward basic and acidic residues. A phosphoserine mark is found at Ser-1131 and Ser-1187. A compositionally biased stretch (basic and acidic residues) spans 1199–1212 (LREKPKAEVPEEQK). Over residues 1230–1239 (SPTSPTSLQP) the composition is skewed to polar residues. The span at 1245–1255 (PPTPPTPPPTQ) shows a compositional bias: pro residues. Residues 1257-1275 (PICSQPQPSSDASIPSPTK) show a composition bias toward polar residues. Ser-1272 is subject to Phosphoserine. Thr-1274 carries the post-translational modification Phosphothreonine. 2 positions are modified to phosphoserine: Ser-1276 and Ser-1335. Residue Thr-1339 is modified to Phosphothreonine. Phosphoserine is present on residues Ser-1369 and Ser-1382. Residues 1405–1420 (PSDKELRSSQEERRDL) show a composition bias toward basic and acidic residues. The segment covering 1421–1433 (SSSSGLGLHDSSS) has biased composition (low complexity). Ser-1431 carries the post-translational modification Phosphoserine. A compositionally biased stretch (polar residues) spans 1434–1452 (NMKTLGSQSFNTSDSTMLT). Thr-1452 is modified (phosphothreonine). Over residues 1454–1465 (PSSPPPPPPPNE) the composition is skewed to pro residues. Residues 1516–1530 (SVDEIPFADDVEDTY) show a composition bias toward acidic residues. Positions 1584–1600 (EAKELAEERMRAREKSV) are enriched in basic and acidic residues. Positions 1623-1633 (SSRSHTAQSQG) are enriched in polar residues. The residue at position 1640 (Ser-1640) is a Phosphoserine. A compositionally biased stretch (low complexity) spans 1665 to 1685 (SPPSDSGGPDGSVTSSEGSSG). Residues 1686–1704 (KSKKRSSLFSPRRNKKEKK) show a composition bias toward basic residues. A phosphoserine mark is found at Ser-1692 and Ser-1695. Residues 1754-1763 (TPSSGATVDS) show a composition bias toward polar residues. Positions 1795–1811 (ILERSSQKSKREPRTYT) are enriched in basic and acidic residues. Positions 1817–1983 (AKLTRRVQKA…EEDKDLEAAM (167 aa)) form a coiled coil. Residues 1819 to 1830 (LTRRVQKAARRQ) show a composition bias toward basic residues. In terms of domain architecture, bMERB spans 1832–1981 (KQEELKRLHR…EKEEDKDLEA (150 aa)). Ser-1903 bears the Phosphoserine mark.

It belongs to the Mical family. As to quaternary structure, interacts with RAB1B, RAB8A, RAB10, RAB13 and RAB15 (in their GTP-bound forms); binding to RAB1B is of low affinity compared to other Rab proteins; at least in case of RAB8A can bind 2 molecules of RAB8A simultaneously through a high and a low affinity binding site, respectively. Interacts with ERC1 and RAB8A; may bridge ERC1 with RAB8A. Interacts with KIF23 and ERC1; enhances the interaction between KIF23 and ERC1. Interacts with NINL. FAD serves as cofactor.

The protein resides in the cytoplasm. It is found in the cell cortex. It localises to the cytoskeleton. The protein localises to the nucleus. Its subcellular location is the midbody. The protein resides in the spindle. It is found in the cilium basal body. It carries out the reaction L-methionyl-[F-actin] + NADPH + O2 + H(+) = L-methionyl-(R)-S-oxide-[F-actin] + NADP(+) + H2O. Functionally, monooxygenase that promotes depolymerization of F-actin by mediating oxidation of specific methionine residues on actin to form methionine-sulfoxide, resulting in actin filament disassembly and preventing repolymerization. In the absence of actin, it also functions as a NADPH oxidase producing H(2)O(2). Seems to act as Rab effector protein and play a role in vesicle trafficking. Involved in exocytic vesicles tethering and fusion: the monooxygenase activity is required for this process and implicates RAB8A associated with exocytotic vesicles. Required for cytokinesis. Contributes to stabilization and/or maturation of the intercellular bridge independently of its monooxygenase activity. Promotes recruitment of Rab8 and ERC1 to the intercellular bridge, and together these proteins are proposed to function in timely abscission. This is [F-actin]-monooxygenase MICAL3 (Mical3) from Mus musculus (Mouse).